The primary structure comprises 255 residues: Triosephosphate isomerase (255 aa).

10-12 (NWK) is a substrate binding site. His96 serves as the catalytic Electrophile. The active-site Proton acceptor is Glu168. Residues Gly174, Ser213, and 234–235 (GG) each bind substrate.

This sequence belongs to the triosephosphate isomerase family. As to quaternary structure, homodimer.

It localises to the cytoplasm. The enzyme catalyses D-glyceraldehyde 3-phosphate = dihydroxyacetone phosphate. Its pathway is carbohydrate biosynthesis; gluconeogenesis. It participates in carbohydrate degradation; glycolysis; D-glyceraldehyde 3-phosphate from glycerone phosphate: step 1/1. Involved in the gluconeogenesis. Catalyzes stereospecifically the conversion of dihydroxyacetone phosphate (DHAP) to D-glyceraldehyde-3-phosphate (G3P). The protein is Triosephosphate isomerase of Histophilus somni (strain 2336) (Haemophilus somnus).